Reading from the N-terminus, the 284-residue chain is Pantothenate synthetase (284 aa).

30–37 (MGNLHDGH) is a binding site for ATP. The active-site Proton donor is the His37. Gln61 contacts (R)-pantoate. Gln61 serves as a coordination point for beta-alanine. ATP is bound at residue 149-152 (GEKD). Gln155 provides a ligand contact to (R)-pantoate. ATP-binding positions include Ile178 and 186 to 189 (LSSR).

Belongs to the pantothenate synthetase family. As to quaternary structure, homodimer.

The protein resides in the cytoplasm. The catalysed reaction is (R)-pantoate + beta-alanine + ATP = (R)-pantothenate + AMP + diphosphate + H(+). The protein operates within cofactor biosynthesis; (R)-pantothenate biosynthesis; (R)-pantothenate from (R)-pantoate and beta-alanine: step 1/1. Catalyzes the condensation of pantoate with beta-alanine in an ATP-dependent reaction via a pantoyl-adenylate intermediate. The protein is Pantothenate synthetase of Salmonella newport (strain SL254).